We begin with the raw amino-acid sequence, 380 residues long: Cytochrome b (380 aa).

The next 4 membrane-spanning stretches (helical) occupy residues Phe-34–Met-54, Trp-78–Ile-99, Trp-114–Leu-134, and Phe-179–Thr-199. His-84 and His-98 together coordinate heme b. Residues His-183 and His-197 each contribute to the heme b site. His-202 serves as a coordination point for a ubiquinone. A run of 4 helical transmembrane segments spans residues Thr-227–Ala-247, Leu-289–His-309, Leu-321–Ser-341, and Phe-348–Pro-368.

Belongs to the cytochrome b family. The cytochrome bc1 complex contains 11 subunits: 3 respiratory subunits (MT-CYB, CYC1 and UQCRFS1), 2 core proteins (UQCRC1 and UQCRC2) and 6 low-molecular weight proteins (UQCRH/QCR6, UQCRB/QCR7, UQCRQ/QCR8, UQCR10/QCR9, UQCR11/QCR10 and a cleavage product of UQCRFS1). This cytochrome bc1 complex then forms a dimer. The cofactor is heme b.

The protein localises to the mitochondrion inner membrane. Component of the ubiquinol-cytochrome c reductase complex (complex III or cytochrome b-c1 complex) that is part of the mitochondrial respiratory chain. The b-c1 complex mediates electron transfer from ubiquinol to cytochrome c. Contributes to the generation of a proton gradient across the mitochondrial membrane that is then used for ATP synthesis. The protein is Cytochrome b (MT-CYB) of Aphanotriccus audax (Black-billed flycatcher).